We begin with the raw amino-acid sequence, 398 residues long: Na(+)/H(+) antiporter NhaA (398 aa).

11 consecutive transmembrane segments (helical) span residues 21 to 41 (LGGY…NSPL), 66 to 86 (VLHW…GLEI), 101 to 121 (IVLP…VYLL), 132 to 152 (GWAI…ALLG), 161 to 181 (IFLT…IAVF), 184 to 204 (AELN…LCVL), 216 to 236 (LLVG…ATLA), 274 to 294 (LLIV…GMGI), 305 to 325 (IALG…WLAI), 343 to 363 (GVAL…ALAF), and 374 to 394 (IGVL…LRVL).

This sequence belongs to the NhaA Na(+)/H(+) (TC 2.A.33) antiporter family.

The protein localises to the cell inner membrane. The catalysed reaction is Na(+)(in) + 2 H(+)(out) = Na(+)(out) + 2 H(+)(in). In terms of biological role, na(+)/H(+) antiporter that extrudes sodium in exchange for external protons. The sequence is that of Na(+)/H(+) antiporter NhaA from Bordetella bronchiseptica (strain ATCC BAA-588 / NCTC 13252 / RB50) (Alcaligenes bronchisepticus).